The chain runs to 87 residues: Toxin Cll4 (87 aa).

A signal peptide spans 1–19 (MNSLLMITACLALIGTVWA). The region spanning 20 to 85 (KEGYIVNYHD…VWPLPKKRCN (66 aa)) is the LCN-type CS-alpha/beta domain. Disulfide bonds link cysteine 31/cysteine 84, cysteine 35/cysteine 60, cysteine 44/cysteine 65, and cysteine 48/cysteine 67. Asparagine amide is present on asparagine 85.

The protein belongs to the long (4 C-C) scorpion toxin superfamily. Sodium channel inhibitor family. Beta subfamily. In terms of tissue distribution, expressed by the venom gland.

It localises to the secreted. Functionally, beta toxins bind voltage-independently at site-4 of sodium channels (Nav) and shift the voltage of activation toward more negative potentials thereby affecting sodium channel activation and promoting spontaneous and repetitive firing. This is Toxin Cll4 from Centruroides limpidus (Mexican scorpion).